The sequence spans 207 residues: 3-demethoxyubiquinol 3-hydroxylase (207 aa).

Fe cation contacts are provided by E56, E86, H89, E138, E170, and H173.

This sequence belongs to the COQ7 family. It depends on Fe cation as a cofactor.

It localises to the cell membrane. The catalysed reaction is a 5-methoxy-2-methyl-3-(all-trans-polyprenyl)benzene-1,4-diol + AH2 + O2 = a 3-demethylubiquinol + A + H2O. It participates in cofactor biosynthesis; ubiquinone biosynthesis. Functionally, catalyzes the hydroxylation of 2-nonaprenyl-3-methyl-6-methoxy-1,4-benzoquinol during ubiquinone biosynthesis. The sequence is that of 3-demethoxyubiquinol 3-hydroxylase from Cupriavidus necator (strain ATCC 17699 / DSM 428 / KCTC 22496 / NCIMB 10442 / H16 / Stanier 337) (Ralstonia eutropha).